The following is a 173-amino-acid chain: uncharacterized protein (173 aa).

This is an uncharacterized protein from Mycobacterium tuberculosis (strain CDC 1551 / Oshkosh).